The chain runs to 322 residues: CRISPR-associated endonuclease Cas1 (322 aa).

Mn(2+)-binding residues include glutamate 149, histidine 214, and glutamate 229.

The protein belongs to the CRISPR-associated endonuclease Cas1 family. As to quaternary structure, homodimer, forms a heterotetramer with a Cas2 homodimer. Requires Mg(2+) as cofactor. Mn(2+) serves as cofactor.

In terms of biological role, CRISPR (clustered regularly interspaced short palindromic repeat), is an adaptive immune system that provides protection against mobile genetic elements (viruses, transposable elements and conjugative plasmids). CRISPR clusters contain spacers, sequences complementary to antecedent mobile elements, and target invading nucleic acids. CRISPR clusters are transcribed and processed into CRISPR RNA (crRNA). Acts as a dsDNA endonuclease. Involved in the integration of spacer DNA into the CRISPR cassette. The polypeptide is CRISPR-associated endonuclease Cas1 (Methanocaldococcus jannaschii (strain ATCC 43067 / DSM 2661 / JAL-1 / JCM 10045 / NBRC 100440) (Methanococcus jannaschii)).